A 759-amino-acid chain; its full sequence is Phosphoribosylformylglycinamidine synthase subunit PurL (759 aa).

Histidine 46 is a catalytic residue. ATP-binding residues include tyrosine 49 and lysine 88. Glutamate 90 contacts Mg(2+). Substrate is bound by residues 91–94 (SHNH) and arginine 113. Histidine 92 serves as the catalytic Proton acceptor. Aspartate 114 is a binding site for Mg(2+). Residue glutamine 237 participates in substrate binding. Position 265 (aspartate 265) interacts with Mg(2+). 309–311 (ESQ) serves as a coordination point for substrate. 2 residues coordinate ATP: aspartate 498 and glycine 535. Asparagine 536 contributes to the Mg(2+) binding site. Serine 538 provides a ligand contact to substrate.

The protein belongs to the FGAMS family. Monomer. Part of the FGAM synthase complex composed of 1 PurL, 1 PurQ and 2 PurS subunits.

Its subcellular location is the cytoplasm. It carries out the reaction N(2)-formyl-N(1)-(5-phospho-beta-D-ribosyl)glycinamide + L-glutamine + ATP + H2O = 2-formamido-N(1)-(5-O-phospho-beta-D-ribosyl)acetamidine + L-glutamate + ADP + phosphate + H(+). Its pathway is purine metabolism; IMP biosynthesis via de novo pathway; 5-amino-1-(5-phospho-D-ribosyl)imidazole from N(2)-formyl-N(1)-(5-phospho-D-ribosyl)glycinamide: step 1/2. In terms of biological role, part of the phosphoribosylformylglycinamidine synthase complex involved in the purines biosynthetic pathway. Catalyzes the ATP-dependent conversion of formylglycinamide ribonucleotide (FGAR) and glutamine to yield formylglycinamidine ribonucleotide (FGAM) and glutamate. The FGAM synthase complex is composed of three subunits. PurQ produces an ammonia molecule by converting glutamine to glutamate. PurL transfers the ammonia molecule to FGAR to form FGAM in an ATP-dependent manner. PurS interacts with PurQ and PurL and is thought to assist in the transfer of the ammonia molecule from PurQ to PurL. The polypeptide is Phosphoribosylformylglycinamidine synthase subunit PurL (Anaeromyxobacter sp. (strain K)).